The sequence spans 178 residues: Photosystem I assembly protein Ycf4 (178 aa).

2 consecutive transmembrane segments (helical) span residues 19–39 and 61–81; these read FLVAAAVSVGGVGFLLASLSS and LVMGLYSIAAALLASYLWYVI.

It belongs to the Ycf4 family.

It localises to the cellular thylakoid membrane. Functionally, seems to be required for the assembly of the photosystem I complex. This is Photosystem I assembly protein Ycf4 from Synechococcus sp. (strain CC9902).